A 102-amino-acid polypeptide reads, in one-letter code: MFAIVRTGGKQYRVAAGDKIVVEKIAGEAGTTVSLEDVLLAGEGADLQPVKGLTVSAEIIAQAKAEKVIVFKKRRRHNYRRRNGHRQQHTILKIVSVGNAAA.

This sequence belongs to the bacterial ribosomal protein bL21 family. In terms of assembly, part of the 50S ribosomal subunit. Contacts protein L20.

This protein binds to 23S rRNA in the presence of protein L20. In Zymomonas mobilis subsp. mobilis (strain ATCC 31821 / ZM4 / CP4), this protein is Large ribosomal subunit protein bL21.